We begin with the raw amino-acid sequence, 94 residues long: Large ribosomal subunit protein bL28 (94 aa).

The protein belongs to the bacterial ribosomal protein bL28 family.

In Novosphingobium aromaticivorans (strain ATCC 700278 / DSM 12444 / CCUG 56034 / CIP 105152 / NBRC 16084 / F199), this protein is Large ribosomal subunit protein bL28.